The sequence spans 62 residues: Photosystem II reaction center protein Z (62 aa).

2 helical membrane passes run 8 to 28 and 41 to 61; these read AVFALIATSSILLISVPVVFA and FSGTSLWIGLVFLVAILNSLI.

The protein belongs to the PsbZ family. In terms of assembly, PSII is composed of 1 copy each of membrane proteins PsbA, PsbB, PsbC, PsbD, PsbE, PsbF, PsbH, PsbI, PsbJ, PsbK, PsbL, PsbM, PsbT, PsbY, PsbZ, Psb30/Ycf12, at least 3 peripheral proteins of the oxygen-evolving complex and a large number of cofactors. It forms dimeric complexes.

It is found in the plastid. The protein localises to the chloroplast thylakoid membrane. Functionally, may control the interaction of photosystem II (PSII) cores with the light-harvesting antenna, regulates electron flow through the 2 photosystem reaction centers. PSII is a light-driven water plastoquinone oxidoreductase, using light energy to abstract electrons from H(2)O, generating a proton gradient subsequently used for ATP formation. The polypeptide is Photosystem II reaction center protein Z (Liriodendron tulipifera (Tuliptree)).